A 246-amino-acid polypeptide reads, in one-letter code: DNA repair protein RecO (246 aa).

Belongs to the RecO family.

Its function is as follows. Involved in DNA repair and RecF pathway recombination. The polypeptide is DNA repair protein RecO (Nitrosococcus oceani (strain ATCC 19707 / BCRC 17464 / JCM 30415 / NCIMB 11848 / C-107)).